We begin with the raw amino-acid sequence, 313 residues long: Protein-methionine-sulfoxide reductase catalytic subunit MsrP (313 aa).

A signal peptide (tat-type signal) is located at residues 1 to 44 (MARWRPDMAEREATPEALYLRRRDFLALGAAGAVGLLLPRGARA). Residues asparagine 76, 79–80 (YE), cysteine 134, threonine 169, asparagine 217, arginine 222, and 233–235 (GAK) each bind Mo-molybdopterin.

Belongs to the MsrP family. In terms of assembly, heterodimer of a catalytic subunit (MsrP) and a heme-binding subunit (MsrQ). It depends on Mo-molybdopterin as a cofactor. Predicted to be exported by the Tat system. The position of the signal peptide cleavage has not been experimentally proven.

The protein resides in the periplasm. The catalysed reaction is L-methionyl-[protein] + a quinone + H2O = L-methionyl-(S)-S-oxide-[protein] + a quinol. The enzyme catalyses L-methionyl-[protein] + a quinone + H2O = L-methionyl-(R)-S-oxide-[protein] + a quinol. Its function is as follows. Part of the MsrPQ system that repairs oxidized periplasmic proteins containing methionine sulfoxide residues (Met-O), using respiratory chain electrons. Thus protects these proteins from oxidative-stress damage caused by reactive species of oxygen and chlorine generated by the host defense mechanisms. MsrPQ is essential for the maintenance of envelope integrity under bleach stress, rescuing a wide series of structurally unrelated periplasmic proteins from methionine oxidation. The catalytic subunit MsrP is non-stereospecific, being able to reduce both (R-) and (S-) diastereoisomers of methionine sulfoxide. The protein is Protein-methionine-sulfoxide reductase catalytic subunit MsrP of Anaeromyxobacter dehalogenans (strain 2CP-1 / ATCC BAA-258).